Reading from the N-terminus, the 402-residue chain is Protein kinase US3 homolog (402 aa).

Disordered stretches follow at residues 1 to 21 and 46 to 88; these read MSSSPEAETMECGISSSKVHD and FPDS…SPET. The Protein kinase domain occupies 102–386; that stretch reads YNIVSSLSPG…AQDILMLPLF (285 aa). ATP is bound by residues 108-116 and Lys-129; that span reads LSPGSEGYI. Asp-218 functions as the Proton acceptor in the catalytic mechanism.

The protein belongs to the protein kinase superfamily. Ser/Thr protein kinase family. Phosphorylated by UL13 homolog; this phosphorylation regulates subsequent phosphorylation of UL31 and UL34 homologs by US3. Autophosphorylated.

It is found in the host cytoplasm. It localises to the host nucleus. It catalyses the reaction L-seryl-[protein] + ATP = O-phospho-L-seryl-[protein] + ADP + H(+). The enzyme catalyses L-threonyl-[protein] + ATP = O-phospho-L-threonyl-[protein] + ADP + H(+). Functionally, multifunctional serine/threonine kinase that plays a role in several processes including egress of virus particles from the nucleus, modulation of the actin cytoskeleton and inhibition of apoptosis. Phosphorylates UL31 and UL34 homologs, two critical regulators of capsid budding from nucleus to endoplasmic reticulum, thereby facilitating virion egress. Modulates and redistributes host components of the nuclear envelope, including LMNA, emerin/EMD and the nuclear matrix protein MATR3. Phosphorylates envelope glycoprotein B (gB), probably to direct it to the cell surface. Promotes virus intracellular spread by restructuring host cell cytoskeleton. Blocks host apoptosis to extend cell survival and allow efficient viral replication. Promotes viral gene expression by phosphorylating host HDAC2 to reduce viral genome silencing. The chain is Protein kinase US3 homolog (MDV092) from Gallus gallus (Chicken).